A 308-amino-acid chain; its full sequence is MRFRGLDLNLLVALDALMTERKLTAAARRINLSQPAMSAAIARLRTYFGDELFSMQGRELIPTPRAEALAPAVRDALLHIQLSVIAWDPLNPAQSDRRFRIILSDFMILVFFARIVERVAREAPGVSFELLPLDDDPHELLRRGDVDFLIFPDVFMSSAHPKAKLFDEALVCVGCPTNKKLLGNISFETYMSMGHVAAQFGREMKPSVEQWLLLEHGFNRRIELVVPGFTLIPRLLSGTNRIATLPLRLVKYFEQTIPLRIVTSPLPPLFFTEAIQWPALHNTDPGNIWLREILLQEASRIDPQSDTC.

The 58-residue stretch at 6 to 63 (LDLNLLVALDALMTERKLTAAARRINLSQPAMSAAIARLRTYFGDELFSMQGRELIPT) folds into the HTH lysR-type domain. The H-T-H motif DNA-binding region spans 23-42 (LTAAARRINLSQPAMSAAIA).

The protein belongs to the LysR transcriptional regulatory family.

Its function is as follows. NodD regulates the expression of the nodABCFE genes which encode other nodulation proteins. NodD is also a negative regulator of its own expression. Binds flavonoids as inducers. This is Nodulation protein D 1 (nodD1) from Rhizobium meliloti (strain 1021) (Ensifer meliloti).